We begin with the raw amino-acid sequence, 177 residues long: tRNA (cytidine(56)-2'-O)-methyltransferase (177 aa).

S-adenosyl-L-methionine-binding positions include L84 and 109–113; that span reads GAEKV.

Belongs to the aTrm56 family. Homodimer.

The protein resides in the cytoplasm. It catalyses the reaction cytidine(56) in tRNA + S-adenosyl-L-methionine = 2'-O-methylcytidine(56) in tRNA + S-adenosyl-L-homocysteine + H(+). Its function is as follows. Specifically catalyzes the AdoMet-dependent 2'-O-ribose methylation of cytidine at position 56 in tRNAs. The polypeptide is tRNA (cytidine(56)-2'-O)-methyltransferase (Methanosarcina mazei (strain ATCC BAA-159 / DSM 3647 / Goe1 / Go1 / JCM 11833 / OCM 88) (Methanosarcina frisia)).